A 512-amino-acid chain; its full sequence is Putative aldehyde-dehydrogenase-like protein y4uC (512 aa).

Residues Met14–Asn41 are disordered. Residue Gly266–Gly271 coordinates NADP(+). Residues Glu286 and Cys320 contribute to the active site.

It belongs to the aldehyde dehydrogenase family.

Its pathway is amino-acid degradation; 4-aminobutanoate degradation. Its function is as follows. Could be a succinate-semialdehyde dehydrogenase (NADP(+)). This Sinorhizobium fredii (strain NBRC 101917 / NGR234) protein is Putative aldehyde-dehydrogenase-like protein y4uC.